The following is a 417-amino-acid chain: MAEIKNYTLNFGPQHPAAHGVLRLVLELDGEVIQRADPHIGLLHRATEKLAENKTFIQSVPYMDRLDYVSMMVNEHGYVLAIERLLGIDVPERAQYIRVLFDEITRVLNHLMWIGAHALDVGAMAVFLYAFREREDLMDVYEAVSGARMHAAYYRPGGVYRDLPDAMPQYKASKIRNEKALAKMNEARSGSVLDFIDDFFTRFPKCVDEYETLLTDNRIWKQRLVGIGVVSPERALQMGLTGPMLRGSGIAWDLRKKQPYEVYDRMDFDVPVGVNGDCYDRYLVRVEEMRQSIRIAKQCIEWLRKNPGPVMTDNHKVAPPSRVGMKTNMEDLIHHFKLFTEGFHVPEGEAYAAVEHPKGEFGIYLVSDGANKPYRLKIRAPGFAHLASLDEMARGHMIADAVTIIGTQDIVFGEIDR.

This sequence belongs to the complex I 49 kDa subunit family. As to quaternary structure, NDH-1 is composed of 14 different subunits. Subunits NuoB, C, D, E, F, and G constitute the peripheral sector of the complex.

It localises to the cell inner membrane. It catalyses the reaction a quinone + NADH + 5 H(+)(in) = a quinol + NAD(+) + 4 H(+)(out). Functionally, NDH-1 shuttles electrons from NADH, via FMN and iron-sulfur (Fe-S) centers, to quinones in the respiratory chain. The immediate electron acceptor for the enzyme in this species is believed to be ubiquinone. Couples the redox reaction to proton translocation (for every two electrons transferred, four hydrogen ions are translocated across the cytoplasmic membrane), and thus conserves the redox energy in a proton gradient. The protein is NADH-quinone oxidoreductase subunit D of Burkholderia ambifaria (strain MC40-6).